The primary structure comprises 352 residues: Peptide chain release factor 1 (352 aa).

Position 229 is an N5-methylglutamine (Gln229).

Belongs to the prokaryotic/mitochondrial release factor family. Post-translationally, methylated by PrmC. Methylation increases the termination efficiency of RF1.

It is found in the cytoplasm. Its function is as follows. Peptide chain release factor 1 directs the termination of translation in response to the peptide chain termination codons UAG and UAA. The protein is Peptide chain release factor 1 of Gluconacetobacter diazotrophicus (strain ATCC 49037 / DSM 5601 / CCUG 37298 / CIP 103539 / LMG 7603 / PAl5).